Reading from the N-terminus, the 211-residue chain is Dephospho-CoA kinase (211 aa).

The region spanning 2 to 204 (IIGLTGSIGM…SGVRRWRRGK (203 aa)) is the DPCK domain. 10 to 15 (GMGKST) contributes to the ATP binding site.

This sequence belongs to the CoaE family.

Its subcellular location is the cytoplasm. It catalyses the reaction 3'-dephospho-CoA + ATP = ADP + CoA + H(+). Its pathway is cofactor biosynthesis; coenzyme A biosynthesis; CoA from (R)-pantothenate: step 5/5. Catalyzes the phosphorylation of the 3'-hydroxyl group of dephosphocoenzyme A to form coenzyme A. The sequence is that of Dephospho-CoA kinase from Rhodospirillum rubrum (strain ATCC 11170 / ATH 1.1.1 / DSM 467 / LMG 4362 / NCIMB 8255 / S1).